The sequence spans 228 residues: ATP-dependent dethiobiotin synthetase BioD (228 aa).

12–17 (DVGKTY) contacts ATP. Residue T16 participates in Mg(2+) binding. K37 is an active-site residue. ATP-binding positions include D53, 114–117 (EGMG), 174–175 (ND), 203–205 (PFI), and N210. Mg(2+) is bound by residues D53 and E114.

It belongs to the dethiobiotin synthetase family. In terms of assembly, homodimer. It depends on Mg(2+) as a cofactor.

It is found in the cytoplasm. The enzyme catalyses (7R,8S)-7,8-diammoniononanoate + CO2 + ATP = (4R,5S)-dethiobiotin + ADP + phosphate + 3 H(+). Its pathway is cofactor biosynthesis; biotin biosynthesis; biotin from 7,8-diaminononanoate: step 1/2. Its function is as follows. Catalyzes a mechanistically unusual reaction, the ATP-dependent insertion of CO2 between the N7 and N8 nitrogen atoms of 7,8-diaminopelargonic acid (DAPA, also called 7,8-diammoniononanoate) to form a ureido ring. This Nitrosopumilus maritimus (strain SCM1) protein is ATP-dependent dethiobiotin synthetase BioD.